We begin with the raw amino-acid sequence, 117 residues long: Large ribosomal subunit protein bL19 (117 aa).

This sequence belongs to the bacterial ribosomal protein bL19 family.

Functionally, this protein is located at the 30S-50S ribosomal subunit interface and may play a role in the structure and function of the aminoacyl-tRNA binding site. The chain is Large ribosomal subunit protein bL19 from Shewanella amazonensis (strain ATCC BAA-1098 / SB2B).